The chain runs to 316 residues: Ornithine carbamoyltransferase (316 aa).

Carbamoyl phosphate is bound by residues 57–60 (STRT), glutamine 84, arginine 108, and 135–138 (HPCQ). Residues asparagine 166, aspartate 230, and 234–235 (SM) each bind L-ornithine. Residues 269–270 (CL) and arginine 297 each bind carbamoyl phosphate.

Belongs to the aspartate/ornithine carbamoyltransferase superfamily. OTCase family.

Its subcellular location is the cytoplasm. It carries out the reaction carbamoyl phosphate + L-ornithine = L-citrulline + phosphate + H(+). It participates in amino-acid biosynthesis; L-arginine biosynthesis; L-arginine from L-ornithine and carbamoyl phosphate: step 1/3. Reversibly catalyzes the transfer of the carbamoyl group from carbamoyl phosphate (CP) to the N(epsilon) atom of ornithine (ORN) to produce L-citrulline. This chain is Ornithine carbamoyltransferase, found in Bacillus thuringiensis subsp. konkukian (strain 97-27).